The primary structure comprises 336 residues: Mitochondrial thiamine pyrophosphate carrier 1 (336 aa).

3 Solcar repeats span residues 11–98 (ISST…VNQV), 112–202 (SSGA…VKDS), and 221–323 (TKGW…SLSI). The next 6 membrane-spanning stretches (helical) occupy residues 17–37 (MLCG…LDVV), 66–86 (GVTA…FYGA), 118–138 (FIAG…FDLF), 177–197 (GVSS…ASYG), 228–244 (TAGL…VFPL), and 298–315 (GFLV…ITMY).

Belongs to the mitochondrial carrier (TC 2.A.29) family.

The protein resides in the mitochondrion inner membrane. Its function is as follows. Mitochondrial transporter that mediates uptake of thiamine pyrophosphate (ThPP) into mitochondria. This chain is Mitochondrial thiamine pyrophosphate carrier 1 (TPC1), found in Yarrowia lipolytica (strain CLIB 122 / E 150) (Yeast).